A 159-amino-acid chain; its full sequence is Ribosomal RNA large subunit methyltransferase H (159 aa).

Residues L76, G108, and 127–132 (FSKMTL) contribute to the S-adenosyl-L-methionine site.

This sequence belongs to the RNA methyltransferase RlmH family. In terms of assembly, homodimer.

The protein localises to the cytoplasm. The catalysed reaction is pseudouridine(1915) in 23S rRNA + S-adenosyl-L-methionine = N(3)-methylpseudouridine(1915) in 23S rRNA + S-adenosyl-L-homocysteine + H(+). Specifically methylates the pseudouridine at position 1915 (m3Psi1915) in 23S rRNA. This is Ribosomal RNA large subunit methyltransferase H from Bacillus cytotoxicus (strain DSM 22905 / CIP 110041 / 391-98 / NVH 391-98).